The primary structure comprises 663 residues: MKLLFKRYSSSHIGKLIKDSLITPEILPQLGRQPSSHKRLPNNKRTNSITDKWLKDALTRKDKLNEDKLQNVNLRLNVVLTTLQKLRTSDNPALYFALLNRIGTGHIKWLNKSGRQIDAFPPDRLPLEFYHELSNMLYKLSLRSANDKIALAKFSLQLLDRYYFLKTKSLTIEGKFRANIKFLRNCTLLIVKSQSNYYLRAIQRLFAENSEGQLLANLSQLAFYVETSQWTSMLDILSSCVPDSGLRGSKERERAIQLLELFSPCLVKSLKVMIAQNMENEACQILRSLSEWNFHFDQHDSSNLIQLSQNHSCLKVIETMNGLSSTTAVTRQFGLEKLPTDVSLKQSIHILSKDNFEPLKQDSFLQFLSFKLSDLPLNLEVWKKHIKEVDDQMQAESNLHSLRAFFIDMLLCHLSVRKDFDFMLSLVEHIVYEKNLWQPLLLTDNIVGNKENSTFHCLFHGASQDISTKLTLLALYNQLNEIGYQFTSHDFLSMLKVCKNYSDSDFFYFAFYNLLVTQSHKFFLFDKFSDKFSWRLPIQIGDAISEWLSSLEIDIQENTDRVLQITDDVGEWYVENKPFKSEKGTIQPINIMELRKIFGERKTLFHMDSEIFQKSKAKRDKEMRNEALFTANDAEYNFAADVSYAKRVENLFSYIRSKQMQQK.

The sequence is that of Protein MNE1 (MNE1) from Saccharomyces cerevisiae (strain ATCC 204508 / S288c) (Baker's yeast).